Here is a 463-residue protein sequence, read N- to C-terminus: MTVEKTMDKIVALAKNRGFIFPGSEIYGGLANSWDYGPLGVEFKNNVKKAWWKKFVQESPYNVGIDAAILMNREVWVASGHVGGFSDPLMDCKECKARCRADKLIEDYMQDKDENFESADGWSNEQLKDFIDKNNIACPKCGEHNFTDVRKFNLMFKTFQGVTEDAQSEIFLRPETAQGIFVNFKNAIRTTRRKMPFGMAQIGKSFRNEITPGNFTFRTREFEQMELEFFCKPGTDLEWFEYWRDYSWNFLLSLGLAKDNLRIREHAKEELAFYSKATVDIEYLFPFGWGELWGIADRTDYDLKQHMNHSGKDLTYLDPETNEKYLPYCIEPSLGADRVALAFLVDAYDEEELDGGDSRTVLRLHPALAPFKAAILPLTKKLKDKSLEVYSMLSKYFNVDYDEAGTIGKRYRREDEIGTPYCITIDYDTLEDNTVTIRDRDSMDQIRINIDELVKYISEKVEF.

Residues R100 and E175 each coordinate substrate. ATP-binding positions include 207–209 (RNE), 217–222 (FRTREF), 291–292 (EL), and 335–338 (GADR). Residue 222–226 (FEQME) coordinates substrate. 331-335 (EPSLG) contributes to the substrate binding site.

Belongs to the class-II aminoacyl-tRNA synthetase family. In terms of assembly, homodimer.

The protein resides in the cytoplasm. It catalyses the reaction tRNA(Gly) + glycine + ATP = glycyl-tRNA(Gly) + AMP + diphosphate. Functionally, catalyzes the attachment of glycine to tRNA(Gly). The polypeptide is Glycine--tRNA ligase (Clostridium tetani (strain Massachusetts / E88)).